We begin with the raw amino-acid sequence, 1377 residues long: Endoribonuclease Dicer homolog 2b (1377 aa).

Residues 1-15 are compositionally biased toward gly residues; sequence MGGPLTAAGGRGDGG. Residues 1–30 form a disordered region; that stretch reads MGGPLTAAGGRGDGGAKAVEPLRPPPPPDP. The Helicase ATP-binding domain maps to 41 to 222; it reads ALERAVRGNT…HNYSKQISEI (182 aa). 54–61 is an ATP binding site; the sequence is LETGSGKT. Positions 163 to 166 match the DECH box motif; the sequence is DECH. In terms of domain architecture, Helicase C-terminal spans 388 to 561; the sequence is TLLQYRHMQD…DTYYRVESTP (174 aa). The region spanning 534–626 is the Dicer dsRNA-binding fold domain; it reads SLRLGSISCQ…LPELDVPCDE (93 aa). Residues 798-913 form the PAZ domain; it reads RDIDLLQTKD…LPPELCRIIM (116 aa). RNase III domains lie at 940 to 1095 and 1132 to 1276; these read SVKL…STAG and VRSL…LDSK. Mg(2+)-binding residues include E1171, D1262, and E1265. The 66-residue stretch at 1302 to 1367 folds into the DRBM domain; it reads DPVKGLQEFC…SKAVLKDLIA (66 aa).

It belongs to the helicase family. Dicer subfamily. In terms of assembly, may interact with ARGONAUTE1 or PINHEAD through their common PAZ domains. Mg(2+) serves as cofactor. Mn(2+) is required as a cofactor.

It localises to the nucleus. Functionally, probably involved in the RNA silencing pathway. May cleave double-stranded RNA to produce short 21-24 nucleotides (nt) RNAs which target the selective destruction of complementary RNAs. The chain is Endoribonuclease Dicer homolog 2b (DCL2B) from Oryza sativa subsp. japonica (Rice).